The primary structure comprises 371 residues: Cytochrome b (371 aa).

4 helical membrane passes run 25–45 (FGSM…FLAV), 69–90 (WMMQ…YIHI), 105–125 (WMSG…GYVL), and 170–190 (FFAL…LHII). H75 and H89 together coordinate heme b. Positions 174 and 188 each coordinate heme b. H193 provides a ligand contact to a ubiquinone. A run of 4 helical transmembrane segments spans residues 218–238 (YKDL…VSFF), 280–300 (LGGA…PFMH), 312–332 (LSQL…WAAT), and 339–358 (YIMI…LSIP).

The protein belongs to the cytochrome b family. In terms of assembly, the cytochrome bc1 complex contains 3 respiratory subunits (MT-CYB, CYC1 and UQCRFS1), 2 core proteins (UQCRC1 and UQCRC2) and probably 6 low-molecular weight proteins. It depends on heme b as a cofactor.

Its subcellular location is the mitochondrion inner membrane. Its function is as follows. Component of the ubiquinol-cytochrome c reductase complex (complex III or cytochrome b-c1 complex) that is part of the mitochondrial respiratory chain. The b-c1 complex mediates electron transfer from ubiquinol to cytochrome c. Contributes to the generation of a proton gradient across the mitochondrial membrane that is then used for ATP synthesis. The sequence is that of Cytochrome b (MT-CYB) from Simalia amethistina (Amethystine python).